The following is a 318-amino-acid chain: Protein RecA (318 aa).

53-60 (GPESSGKT) is an ATP binding site.

The protein belongs to the RecA family.

It localises to the cytoplasm. Functionally, can catalyze the hydrolysis of ATP in the presence of single-stranded DNA, the ATP-dependent uptake of single-stranded DNA by duplex DNA, and the ATP-dependent hybridization of homologous single-stranded DNAs. It interacts with LexA causing its activation and leading to its autocatalytic cleavage. The polypeptide is Protein RecA (Bacteroides fragilis (strain YCH46)).